Here is a 363-residue protein sequence, read N- to C-terminus: Chorismate synthase (363 aa).

Arginine 47 contributes to the NADP(+) binding site. FMN-binding positions include 124-126 (RAS), glycine 286, 301-305 (KPTAT), and arginine 327.

The protein belongs to the chorismate synthase family. As to quaternary structure, homotetramer. FMNH2 is required as a cofactor.

It catalyses the reaction 5-O-(1-carboxyvinyl)-3-phosphoshikimate = chorismate + phosphate. It participates in metabolic intermediate biosynthesis; chorismate biosynthesis; chorismate from D-erythrose 4-phosphate and phosphoenolpyruvate: step 7/7. Its function is as follows. Catalyzes the anti-1,4-elimination of the C-3 phosphate and the C-6 proR hydrogen from 5-enolpyruvylshikimate-3-phosphate (EPSP) to yield chorismate, which is the branch point compound that serves as the starting substrate for the three terminal pathways of aromatic amino acid biosynthesis. This reaction introduces a second double bond into the aromatic ring system. The polypeptide is Chorismate synthase (Prochlorococcus marinus (strain MIT 9211)).